Here is a 110-residue protein sequence, read N- to C-terminus: Evasin P1166 (110 aa).

The N-terminal stretch at 1–24 (MEVKIFTLLQIALFIALGIHLVVA) is a signal peptide. 3 cysteine pairs are disulfide-bonded: cysteine 45-cysteine 67, cysteine 49-cysteine 69, and cysteine 60-cysteine 80. N-linked (GlcNAc...) asparagine glycosylation is present at asparagine 48. The disordered stretch occupies residues 89–110 (SEYPNPKSSEIDAAAPLPRETH).

The protein resides in the secreted. Its function is as follows. Salivary chemokine-binding protein which binds to host chemokines CXCL1, CXCL2 and CXCL8. The sequence is that of Evasin P1166 from Ixodes ricinus (Common tick).